We begin with the raw amino-acid sequence, 363 residues long: Phospho-N-acetylmuramoyl-pentapeptide-transferase (363 aa).

10 consecutive transmembrane segments (helical) span residues 33–53 (YAVL…GVLP), 82–102 (GVIF…PSFV), 105–125 (LILL…CAQV), 133–153 (GALD…FYFH), 166–186 (PVFV…WMSI), 198–218 (LSGA…YFLL), 227–247 (LLVP…ALAG), 271–291 (ALGF…LLLM), 295–315 (VILV…FFHV), and 340–360 (VLLR…GVLF).

Belongs to the glycosyltransferase 4 family. MraY subfamily. Mg(2+) is required as a cofactor.

Its subcellular location is the cell inner membrane. It carries out the reaction UDP-N-acetyl-alpha-D-muramoyl-L-alanyl-gamma-D-glutamyl-meso-2,6-diaminopimeloyl-D-alanyl-D-alanine + di-trans,octa-cis-undecaprenyl phosphate = di-trans,octa-cis-undecaprenyl diphospho-N-acetyl-alpha-D-muramoyl-L-alanyl-D-glutamyl-meso-2,6-diaminopimeloyl-D-alanyl-D-alanine + UMP. The protein operates within cell wall biogenesis; peptidoglycan biosynthesis. Its function is as follows. Catalyzes the initial step of the lipid cycle reactions in the biosynthesis of the cell wall peptidoglycan: transfers peptidoglycan precursor phospho-MurNAc-pentapeptide from UDP-MurNAc-pentapeptide onto the lipid carrier undecaprenyl phosphate, yielding undecaprenyl-pyrophosphoryl-MurNAc-pentapeptide, known as lipid I. The sequence is that of Phospho-N-acetylmuramoyl-pentapeptide-transferase from Treponema pallidum (strain Nichols).